The chain runs to 473 residues: Flavonol 3-O-glucosyltransferase UGT89B1 (473 aa).

His-25 functions as the Proton acceptor in the catalytic mechanism. His-25 is a binding site for an anthocyanidin. The active-site Charge relay is the Asp-127. The UDP-alpha-D-glucose site is built by Ala-348, Gln-350, His-365, Trp-368, Asn-369, Ser-370, and Glu-373. Ala-388 is an an anthocyanidin binding site. Residues Asp-389 and Gln-390 each contribute to the UDP-alpha-D-glucose site.

Belongs to the UDP-glycosyltransferase family.

The enzyme catalyses a flavonol + UDP-alpha-D-glucose = a flavonol 3-O-beta-D-glucoside + UDP + H(+). It catalyses the reaction a 7-O-hydroxy-flavonol + UDP-alpha-D-glucose = a flavonol 7-O-beta-D-glucoside + UDP + H(+). In terms of biological role, possesses quercetin 3-O-glucosyltransferase, 7-O-glucosyltransferase and 4'-O-glucosyltransferase activities in vitro. Also active in vitro on benzoates and benzoate derivatives. The polypeptide is Flavonol 3-O-glucosyltransferase UGT89B1 (Arabidopsis thaliana (Mouse-ear cress)).